The following is a 110-amino-acid chain: UPF0122 protein BCA_3946 (110 aa).

The protein belongs to the UPF0122 family.

In terms of biological role, might take part in the signal recognition particle (SRP) pathway. This is inferred from the conservation of its genetic proximity to ftsY/ffh. May be a regulatory protein. In Bacillus cereus (strain 03BB102), this protein is UPF0122 protein BCA_3946.